Reading from the N-terminus, the 480-residue chain is Gamma-aminobutyric acid receptor subunit rho-1 (480 aa).

An N-terminal signal peptide occupies residues 1–21 (MLAVQNMKFGIFLLWWGWVLA). Topologically, residues 22–281 (AESTAHWPGR…LYINFTLRRH (260 aa)) are extracellular. Residues 29 to 38 (PGREVHEPSR) are compositionally biased toward basic and acidic residues. A disordered region spans residues 29–67 (PGREVHEPSRKGSRPQRQRRGAHDDAHKQGSPILRRSSD). Over residues 39-48 (KGSRPQRQRR) the composition is skewed to basic residues. A 4-aminobutanoate-binding site is contributed by Arg-126. Asn-141 carries an N-linked (GlcNAc...) asparagine glycan. Residue Ser-190 coordinates 4-aminobutanoate. Cys-199 and Cys-213 are joined by a disulfide. Residue Glu-218 participates in 4-aminobutanoate binding. N-linked (GlcNAc...) asparagine glycosylation is found at Asn-235 and Asn-275. Residues 282–302 (IFFFLLQTYFPATLMVMLSWV) form a helical membrane-spanning segment. Topologically, residues 303–314 (SFWIDRRAVPAR) are cytoplasmic. Residues 315–335 (VPLGITTVLTMSTIITGVNAS) form a helical membrane-spanning segment. The Extracellular segment spans residues 336–346 (MPRVSYIKAVD). Residues 347-367 (IYLWVSFVFVFLSVLEYAAVN) traverse the membrane as a helical segment. Topologically, residues 368-458 (YLTTVQERKE…MRINTHAIDK (91 aa)) are cytoplasmic. Residues 459–479 (YSRIIFPAAYILFNLIYWSIF) form a helical membrane-spanning segment. Ser-480 is a topological domain (extracellular).

It belongs to the ligand-gated ion channel (TC 1.A.9) family. Gamma-aminobutyric acid receptor (TC 1.A.9.5) subfamily. GABRR1 sub-subfamily. Three rho subunits (rho-1/GBRR1, rho-2/GBRR2 and rho-3/GBRR3) coassemble either to form functional homopentamers or heteropentamers. Rho-1/GBRR1 subunits can also associate with alpha-1/GBRA1 subunits to form a functional GABAAR. Interacts with SQSTM1. Expressed in the cerebellum.

The protein localises to the postsynaptic cell membrane. It is found in the cell membrane. The enzyme catalyses chloride(in) = chloride(out). Inhibited by TPMPA, a rho-specific antagonist, when forming a homopentamer. In contrast with other GABAARs, rho-1 GABAAR is not inhibited by bicuculline when forming a homopentamer. Rho subunit of the pentameric ligand-gated chloride channels responsible for mediating the effects of gamma-aminobutyric acid (GABA), the major inhibitory neurotransmitter in the brain. Rho-containing GABA-gated chloride channels are a subclass of GABA(A) receptors (GABAARs) entirely composed of rho subunits, where GABA molecules bind at the rho intersubunit interfaces. When activated by GABA, rho-GABAARs selectively allow the flow of chloride anions across the cell membrane down their electrochemical gradient. Rho-1 subunits are primarily expressed in retina where rho-1-containing GABAARs play a role in retinal neurotransmission. Rho-1 GABAARs are also involved in neuronal tonic (extrasynaptic) and phasic (synaptic) transmission in the Purkinje neurons of the cerebellum. Rho-1 GABAARs may also contribute to the regulation of glial development in the cerebellum by controlling extrasynaptic transmission. This chain is Gamma-aminobutyric acid receptor subunit rho-1, found in Mus musculus (Mouse).